Here is a 482-residue protein sequence, read N- to C-terminus: Glutamate--tRNA ligase (482 aa).

The 'HIGH' region signature appears at 10–20 (PSPTGFLHIGN). Residues 253–257 (KLSKR) carry the 'KMSKS' region motif. Lys-256 lines the ATP pocket.

Belongs to the class-I aminoacyl-tRNA synthetase family. Glutamate--tRNA ligase type 1 subfamily. Monomer.

The protein resides in the cytoplasm. The catalysed reaction is tRNA(Glu) + L-glutamate + ATP = L-glutamyl-tRNA(Glu) + AMP + diphosphate. Functionally, catalyzes the attachment of glutamate to tRNA(Glu) in a two-step reaction: glutamate is first activated by ATP to form Glu-AMP and then transferred to the acceptor end of tRNA(Glu). The polypeptide is Glutamate--tRNA ligase (Mesoplasma florum (strain ATCC 33453 / NBRC 100688 / NCTC 11704 / L1) (Acholeplasma florum)).